The primary structure comprises 81 residues: Small ribosomal subunit protein bS16 (81 aa).

Belongs to the bacterial ribosomal protein bS16 family.

This is Small ribosomal subunit protein bS16 from Desulfotalea psychrophila (strain LSv54 / DSM 12343).